Reading from the N-terminus, the 388-residue chain is Chorismate synthase (388 aa).

NADP(+)-binding residues include R39 and R45. Residues 132–134 (RSS), 251–252 (NA), G296, 311–315 (KPIPT), and R337 contribute to the FMN site.

It belongs to the chorismate synthase family. Homotetramer. FMNH2 is required as a cofactor.

It carries out the reaction 5-O-(1-carboxyvinyl)-3-phosphoshikimate = chorismate + phosphate. The protein operates within metabolic intermediate biosynthesis; chorismate biosynthesis; chorismate from D-erythrose 4-phosphate and phosphoenolpyruvate: step 7/7. In terms of biological role, catalyzes the anti-1,4-elimination of the C-3 phosphate and the C-6 proR hydrogen from 5-enolpyruvylshikimate-3-phosphate (EPSP) to yield chorismate, which is the branch point compound that serves as the starting substrate for the three terminal pathways of aromatic amino acid biosynthesis. This reaction introduces a second double bond into the aromatic ring system. This is Chorismate synthase from Staphylococcus epidermidis (strain ATCC 35984 / DSM 28319 / BCRC 17069 / CCUG 31568 / BM 3577 / RP62A).